Here is a 309-residue protein sequence, read N- to C-terminus: Protease HtpX homolog (309 aa).

A run of 2 helical transmembrane segments spans residues 7-27 (TTVL…MLGG) and 29-49 (QGMM…YWYS). Residue His131 participates in Zn(2+) binding. Glu132 is a catalytic residue. A Zn(2+)-binding site is contributed by His135. 2 consecutive transmembrane segments (helical) span residues 141-161 (ILIG…ASMA) and 182-202 (IGLI…QMAI). Position 207 (Glu207) interacts with Zn(2+). A disordered region spans residues 278–309 (RHGSDSGTGNRDSSIRRRNMNTEAKAAWDRLR).

Belongs to the peptidase M48B family. Requires Zn(2+) as cofactor.

The protein localises to the cell inner membrane. The chain is Protease HtpX homolog from Desulforapulum autotrophicum (strain ATCC 43914 / DSM 3382 / VKM B-1955 / HRM2) (Desulfobacterium autotrophicum).